The sequence spans 175 residues: Adenine phosphoribosyltransferase (175 aa).

Belongs to the purine/pyrimidine phosphoribosyltransferase family. In terms of assembly, homodimer.

It is found in the cytoplasm. It catalyses the reaction AMP + diphosphate = 5-phospho-alpha-D-ribose 1-diphosphate + adenine. It functions in the pathway purine metabolism; AMP biosynthesis via salvage pathway; AMP from adenine: step 1/1. In terms of biological role, catalyzes a salvage reaction resulting in the formation of AMP, that is energically less costly than de novo synthesis. This Oenococcus oeni (strain ATCC BAA-331 / PSU-1) protein is Adenine phosphoribosyltransferase.